The primary structure comprises 129 residues: Small ribosomal subunit protein uS9 (129 aa).

The protein belongs to the universal ribosomal protein uS9 family.

The chain is Small ribosomal subunit protein uS9 (rps9) from Thermoplasma acidophilum (strain ATCC 25905 / DSM 1728 / JCM 9062 / NBRC 15155 / AMRC-C165).